We begin with the raw amino-acid sequence, 630 residues long: 1-deoxy-D-xylulose-5-phosphate synthase (630 aa).

Thiamine diphosphate-binding positions include His-73 and 114–116 (SHA). Asp-146 lines the Mg(2+) pocket. Residues 147–148 (GA), Asn-176, Phe-287, and Glu-371 each bind thiamine diphosphate. Asn-176 is a Mg(2+) binding site.

Belongs to the transketolase family. DXPS subfamily. As to quaternary structure, homodimer. Requires Mg(2+) as cofactor. Thiamine diphosphate is required as a cofactor.

It catalyses the reaction D-glyceraldehyde 3-phosphate + pyruvate + H(+) = 1-deoxy-D-xylulose 5-phosphate + CO2. Its pathway is metabolic intermediate biosynthesis; 1-deoxy-D-xylulose 5-phosphate biosynthesis; 1-deoxy-D-xylulose 5-phosphate from D-glyceraldehyde 3-phosphate and pyruvate: step 1/1. Functionally, catalyzes the acyloin condensation reaction between C atoms 2 and 3 of pyruvate and glyceraldehyde 3-phosphate to yield 1-deoxy-D-xylulose-5-phosphate (DXP). The sequence is that of 1-deoxy-D-xylulose-5-phosphate synthase from Corynebacterium jeikeium (strain K411).